The chain runs to 496 residues: Probable cytosol aminopeptidase (496 aa).

Positions 252 and 257 each coordinate Mn(2+). Lys-264 is a catalytic residue. Positions 275, 334, and 336 each coordinate Mn(2+). Arg-338 is an active-site residue.

The protein belongs to the peptidase M17 family. Mn(2+) serves as cofactor.

It localises to the cytoplasm. It catalyses the reaction Release of an N-terminal amino acid, Xaa-|-Yaa-, in which Xaa is preferably Leu, but may be other amino acids including Pro although not Arg or Lys, and Yaa may be Pro. Amino acid amides and methyl esters are also readily hydrolyzed, but rates on arylamides are exceedingly low.. It carries out the reaction Release of an N-terminal amino acid, preferentially leucine, but not glutamic or aspartic acids.. Its function is as follows. Presumably involved in the processing and regular turnover of intracellular proteins. Catalyzes the removal of unsubstituted N-terminal amino acids from various peptides. The chain is Probable cytosol aminopeptidase from Leifsonia xyli subsp. xyli (strain CTCB07).